We begin with the raw amino-acid sequence, 397 residues long: Succinate--CoA ligase [ADP-forming] subunit beta (397 aa).

Residues 9-254 enclose the ATP-grasp domain; the sequence is KALLKGYGAP…ETEEDAKEIE (246 aa). Residues Lys46, 53–55, Glu109, Ala112, and Glu117 each bind ATP; that span reads GRG. Positions 209 and 223 each coordinate Mg(2+). Substrate-binding positions include Asn274 and 331–333; that span reads GIM.

It belongs to the succinate/malate CoA ligase beta subunit family. In terms of assembly, heterotetramer of two alpha and two beta subunits. Mg(2+) serves as cofactor.

It carries out the reaction succinate + ATP + CoA = succinyl-CoA + ADP + phosphate. It catalyses the reaction GTP + succinate + CoA = succinyl-CoA + GDP + phosphate. It functions in the pathway carbohydrate metabolism; tricarboxylic acid cycle; succinate from succinyl-CoA (ligase route): step 1/1. Functionally, succinyl-CoA synthetase functions in the citric acid cycle (TCA), coupling the hydrolysis of succinyl-CoA to the synthesis of either ATP or GTP and thus represents the only step of substrate-level phosphorylation in the TCA. The beta subunit provides nucleotide specificity of the enzyme and binds the substrate succinate, while the binding sites for coenzyme A and phosphate are found in the alpha subunit. The sequence is that of Succinate--CoA ligase [ADP-forming] subunit beta from Rhizobium etli (strain ATCC 51251 / DSM 11541 / JCM 21823 / NBRC 15573 / CFN 42).